A 472-amino-acid polypeptide reads, in one-letter code: UDP-N-acetylmuramoyl-L-alanyl-D-glutamate--2,6-diaminopimelate ligase (472 aa).

Ser-21 is a binding site for UDP-N-acetyl-alpha-D-muramoyl-L-alanyl-D-glutamate. 99–105 contacts ATP; it reads GTNGKTS. Residues 143-144, Ser-170, Gln-176, and Arg-178 contribute to the UDP-N-acetyl-alpha-D-muramoyl-L-alanyl-D-glutamate site; that span reads TT. Lys-210 is modified (N6-carboxylysine). Residues Arg-367, 391-394, Gly-440, and Glu-444 each bind meso-2,6-diaminopimelate; that span reads DNPR. The short motif at 391–394 is the Meso-diaminopimelate recognition motif element; it reads DNPR.

This sequence belongs to the MurCDEF family. MurE subfamily. Mg(2+) is required as a cofactor. Carboxylation is probably crucial for Mg(2+) binding and, consequently, for the gamma-phosphate positioning of ATP.

Its subcellular location is the cytoplasm. The catalysed reaction is UDP-N-acetyl-alpha-D-muramoyl-L-alanyl-D-glutamate + meso-2,6-diaminopimelate + ATP = UDP-N-acetyl-alpha-D-muramoyl-L-alanyl-gamma-D-glutamyl-meso-2,6-diaminopimelate + ADP + phosphate + H(+). It functions in the pathway cell wall biogenesis; peptidoglycan biosynthesis. Functionally, catalyzes the addition of meso-diaminopimelic acid to the nucleotide precursor UDP-N-acetylmuramoyl-L-alanyl-D-glutamate (UMAG) in the biosynthesis of bacterial cell-wall peptidoglycan. This is UDP-N-acetylmuramoyl-L-alanyl-D-glutamate--2,6-diaminopimelate ligase from Anaplasma marginale (strain St. Maries).